The following is a 350-amino-acid chain: GTPase Obg (350 aa).

The region spanning 1 to 158 (MFIDSVKITL…RLVRLELKLI (158 aa)) is the Obg domain. The region spanning 159-339 (ADVGLVGFPN…LKFMLLEEIK (181 aa)) is the OBG-type G domain. GTP is bound by residues 165-172 (GFPNVGKS), 190-194 (FTTLT), 212-215 (DIPG), 280-283 (SKSD), and 320-322 (SSL). Mg(2+) is bound by residues Ser172 and Thr192.

The protein belongs to the TRAFAC class OBG-HflX-like GTPase superfamily. OBG GTPase family. In terms of assembly, monomer. Mg(2+) is required as a cofactor.

The protein localises to the cytoplasm. In terms of biological role, an essential GTPase which binds GTP, GDP and possibly (p)ppGpp with moderate affinity, with high nucleotide exchange rates and a fairly low GTP hydrolysis rate. Plays a role in control of the cell cycle, stress response, ribosome biogenesis and in those bacteria that undergo differentiation, in morphogenesis control. This is GTPase Obg from Campylobacter jejuni (strain RM1221).